A 142-amino-acid polypeptide reads, in one-letter code: Large ribosomal subunit protein uL13 (142 aa).

This sequence belongs to the universal ribosomal protein uL13 family. In terms of assembly, part of the 50S ribosomal subunit.

This protein is one of the early assembly proteins of the 50S ribosomal subunit, although it is not seen to bind rRNA by itself. It is important during the early stages of 50S assembly. The polypeptide is Large ribosomal subunit protein uL13 (Pseudomonas aeruginosa (strain LESB58)).